Reading from the N-terminus, the 1062-residue chain is Histone H3-lysine(4) N-trimethyltransferase ATX1 (1062 aa).

The tract at residues 159-184 is disordered; the sequence is NAFSGNKQNGSSRRKGSSSKNQDKAT. Positions 301-365 constitute a PWWP domain; sequence PGDIVWAKLA…VKQAISFIKG (65 aa). The tract at residues 401–424 is disordered; the sequence is QLQKGADSVDSDMANSTEEGNSGG. The FYR N-terminal domain maps to 441-500; it reads DFRHIIGDLLIINLGKVVTDSQFFKDENHIWPEGYTAMRKFTSLTDHSASALYKMEVLRD. In terms of domain architecture, FYR C-terminal spans 504–586; it reads KTHPLFIVTA…RPSSHVSMCK (83 aa). The segment at 591 to 647 adopts a Phorbol-ester/DAG-type zinc-finger fold; the sequence is RHQNQPTGYRPVRVDWKDLDKCNVCHMDEEYENNLFLQCDKCRMMVHAKCYGELEPC. The tract at residues 599–1062 is interaction with PIP5; it reads YRPVRVDWKD…RCDLIDWTAE (464 aa). The PHD-type 1 zinc finger occupies 609-660; it reads LDKCNVCHMDEEYENNLFLQCDKCRMMVHAKCYGELEPCDGALWLCNLCRPG. The segment at 665-698 adopts a C2HC pre-PHD-type zinc-finger fold; it reads PPRCCLCPVVGGAMKPTTDGRWAHLACAIWIPET. A PHD-type 2 zinc finger spans residues 722–785; it reads LMCTICGVSY…RMLSFCKRHR (64 aa). The SET domain maps to 898–1016; the sequence is KRLAFGKSGI…KWEELTYDYR (119 aa). His908 lines the S-adenosyl-L-methionine pocket. Ser947 carries an O-linked (GlcNAc) serine glycan. S-adenosyl-L-methionine contacts are provided by residues Tyr954 and 977 to 978; that span reads NH. Zn(2+) contacts are provided by Cys980, Cys1026, Cys1028, and Cys1033. In terms of domain architecture, Post-SET spans 1022–1038; that stretch reads ERLSCSCGFPGCRGVVN.

This sequence belongs to the class V-like SAM-binding methyltransferase superfamily. Histone-lysine methyltransferase family. TRX/MLL subfamily. In terms of assembly, interacts with PIP5. Interacts with WDR5A. Binds to CLF in the nucleus. Interacts with NRPB1 CTD domain, especially when NRPB1 is phosphorylated on 'Ser-5' of the heptapeptide repeat. Component of a nuclear protein complex containing at least TATA binding proteins (TBPs, e.g. TBP1 and TBP2) and ATX1. Associates with ULT1 for trimethylating 'Lys-4' on histone H3 (H3K4me3) at flower MADS box gene loci. Interacts with SEC. Interacts with A4/EF1A in the cytoplasm on the nuclear periphery. Activated via O-glycosylation by SEC; this modification triggers FLC locus H3K4me3 histone modification, thus preventing premature flowering. In terms of tissue distribution, strongly expressed in cotyledons, but weak levels in the first true leaves, except at the hydothodes. Ubiquitous with higher levels in dividing tissues, including inflorescence meristem and flower primordia. Expressed also in leaves (especially at hydathodes), in growing inflorescence stems and in the mature flowers. As to expression, strongly expressed in young seedlings.

The protein resides in the nucleus. It localises to the cytoplasm. Its subcellular location is the perinuclear region. The catalysed reaction is L-lysyl(4)-[histone H3] + 3 S-adenosyl-L-methionine = N(6),N(6),N(6)-trimethyl-L-lysyl(4)-[histone H3] + 3 S-adenosyl-L-homocysteine + 3 H(+). It carries out the reaction L-lysyl-[protein] + 3 S-adenosyl-L-methionine = N(6),N(6),N(6)-trimethyl-L-lysyl-[protein] + 3 S-adenosyl-L-homocysteine + 3 H(+). Binds to the promoter and regulates the transcription of target genes, maintaining them in an active state; at promoters, required for TATA binding proteins (TBPs, e.g. TBP1 and TBP2) and RNA polymerase II (Pol II) recruitment, and, in a subsequent event, is recruited by a phosphorylated form of Pol II to the +300-bp region of transcribed sequences to trimethylates nucleosomes. Histone trimethyltransferase that trimethylates 'Lys-4' of histone H3 (H3K4me3); H3 'Lys-4' methylation represents a specific tag for epigenetic transcriptional activation and is required for efficient elongation of transcription but not for transcription initiation. Methylates only a limited fraction of nucleosomes of target genes (e.g. FLC, NAP, XTH33 and WRKY70). Necessary for WDR5A occupancy at WRKY70 and LTP7 genes. Required to maintain the active state of class A (AP1 and AP2), class B (PI and AP3) and class C (AG, AGAMOUS) floral homeotic genes at early stages of flower development. Together with CLF, modulates AG nucleosome methylation statement. Involved in epigenetic regulation (e.g. H3K4me3) of the floral repressors FLC, FT and SOC1 to prevent the transition from vegetative to reproductive development, independently of the photoperiod; binds the active FLC locus before flowering, but this interaction is released upon the transition to flowering. Regulates floral organ identity and flowering transition. Functions as a receptor for the lipid messenger phosphatidylinositol 5-phosphate (PI5P), which negatively regulates its transcriptional activation activity. Exhibits histone methylase activity and subsequent transcriptional regulation on WRKY70 gene, and, to a lower extent on secondary defense-response targets salicylic acid (SA)-responsive gene PR1 and jasmonic acid (JA)-responsive gene THI2.1. Involved in response to dehydration stress-response in both abscisic acid (ABA)-dependent and ABA-independent pathways; this includes specific genes (e.g. COR15A, ADH1, CBF4, RD29A, RD29B, RD26, ABF3, NCED3 and ABA3) epigenetic regulation (e.g. H3K4me3 and Pol II recruitment) to promote their transcription and influence ABA production. Implicated in stomatal closure regulation. Indirect repressor of XTH genes (XTH33). Necessary for the phosphorylation of Pol II NRPB1 (e.g. Ser5P and Ser2P) at the promoters of target genes, thus regulating both early and late stages of transcription. Controls root growth and architecture by regulating the timing of root development, stem cell niche maintenance (e.g. quiescent center (QC)), and cell patterning during primary and lateral root development. Modulates cell cycle duration, cell production, and the transition from cell proliferation in the root apical meristem (RAM) to cell elongation. Its function is as follows. Trimethylates A4/EF1A post-translationally at Lys-396. Required for actin cytoskeleton organization. The protein is Histone H3-lysine(4) N-trimethyltransferase ATX1 of Arabidopsis thaliana (Mouse-ear cress).